The chain runs to 258 residues: Acetylglutamate kinase (258 aa).

Substrate is bound by residues 41 to 42, Arg63, and Asn156; that span reads GG.

Belongs to the acetylglutamate kinase family. ArgB subfamily.

The protein localises to the cytoplasm. It catalyses the reaction N-acetyl-L-glutamate + ATP = N-acetyl-L-glutamyl 5-phosphate + ADP. It participates in amino-acid biosynthesis; L-arginine biosynthesis; N(2)-acetyl-L-ornithine from L-glutamate: step 2/4. Its function is as follows. Catalyzes the ATP-dependent phosphorylation of N-acetyl-L-glutamate. This chain is Acetylglutamate kinase, found in Bacillus amyloliquefaciens (Bacillus velezensis).